A 301-amino-acid chain; its full sequence is Pyridoxal 5'-phosphate synthase subunit PdxS (301 aa).

D31 contributes to the D-ribose 5-phosphate binding site. The Schiff-base intermediate with D-ribose 5-phosphate role is filled by K88. G160 serves as a coordination point for D-ribose 5-phosphate. R172 lines the D-glyceraldehyde 3-phosphate pocket. D-ribose 5-phosphate is bound by residues G221 and 242-243; that span reads GS. A disordered region spans residues 273–301; it reads EIAKSPGKGMKGQANETLPEEEKLQDRGI. Residues 292–301 are compositionally biased toward basic and acidic residues; the sequence is EEEKLQDRGI.

Belongs to the PdxS/SNZ family. In terms of assembly, in the presence of PdxT, forms a dodecamer of heterodimers.

The enzyme catalyses aldehydo-D-ribose 5-phosphate + D-glyceraldehyde 3-phosphate + L-glutamine = pyridoxal 5'-phosphate + L-glutamate + phosphate + 3 H2O + H(+). The protein operates within cofactor biosynthesis; pyridoxal 5'-phosphate biosynthesis. Functionally, catalyzes the formation of pyridoxal 5'-phosphate from ribose 5-phosphate (RBP), glyceraldehyde 3-phosphate (G3P) and ammonia. The ammonia is provided by the PdxT subunit. Can also use ribulose 5-phosphate and dihydroxyacetone phosphate as substrates, resulting from enzyme-catalyzed isomerization of RBP and G3P, respectively. In Natronomonas pharaonis (strain ATCC 35678 / DSM 2160 / CIP 103997 / JCM 8858 / NBRC 14720 / NCIMB 2260 / Gabara) (Halobacterium pharaonis), this protein is Pyridoxal 5'-phosphate synthase subunit PdxS.